We begin with the raw amino-acid sequence, 166 residues long: Calmodulin-like protein 5 (166 aa).

EF-hand domains lie at 11 to 46 (EQVA…LGQT), 47 to 82 (PTRE…KASR), 96 to 131 (AADE…LGEK), and 132 to 166 (LTDE…LSDQ). Ca(2+) is bound by residues D24, D26, D28, C30, E35, D60, D62, N64, T66, E71, D109, D111, D113, and E120. K131 carries the post-translational modification N6,N6,N6-trimethyllysine. D145, D147, D149, Q151, and E156 together coordinate Ca(2+).

It belongs to the calmodulin family.

In terms of biological role, potential calcium sensor. This is Calmodulin-like protein 5 (CML5) from Oryza sativa subsp. japonica (Rice).